Consider the following 729-residue polypeptide: Fatty acid oxidation complex subunit alpha (729 aa).

Residues M1–K189 form an enoyl-CoA hydratase/isomerase region. Position 296 (D296) interacts with substrate. The segment at E311 to A729 is 3-hydroxyacyl-CoA dehydrogenase. Residues M324, D343, V400–E402, K407, and S429 each bind NAD(+). Catalysis depends on H450, which acts as the For 3-hydroxyacyl-CoA dehydrogenase activity. Residue N453 coordinates NAD(+). Substrate is bound by residues N500 and Y660. The interval R708–A729 is disordered.

This sequence in the N-terminal section; belongs to the enoyl-CoA hydratase/isomerase family. The protein in the C-terminal section; belongs to the 3-hydroxyacyl-CoA dehydrogenase family. As to quaternary structure, heterotetramer of two alpha chains (FadB) and two beta chains (FadA).

It carries out the reaction a (3S)-3-hydroxyacyl-CoA + NAD(+) = a 3-oxoacyl-CoA + NADH + H(+). The enzyme catalyses a (3S)-3-hydroxyacyl-CoA = a (2E)-enoyl-CoA + H2O. It catalyses the reaction a 4-saturated-(3S)-3-hydroxyacyl-CoA = a (3E)-enoyl-CoA + H2O. The catalysed reaction is (3S)-3-hydroxybutanoyl-CoA = (3R)-3-hydroxybutanoyl-CoA. It carries out the reaction a (3Z)-enoyl-CoA = a 4-saturated (2E)-enoyl-CoA. The enzyme catalyses a (3E)-enoyl-CoA = a 4-saturated (2E)-enoyl-CoA. It functions in the pathway lipid metabolism; fatty acid beta-oxidation. Functionally, involved in the aerobic and anaerobic degradation of long-chain fatty acids via beta-oxidation cycle. Catalyzes the formation of 3-oxoacyl-CoA from enoyl-CoA via L-3-hydroxyacyl-CoA. It can also use D-3-hydroxyacyl-CoA and cis-3-enoyl-CoA as substrate. The chain is Fatty acid oxidation complex subunit alpha from Salmonella agona (strain SL483).